A 183-amino-acid polypeptide reads, in one-letter code: Lipocalin (183 aa).

The first 20 residues, 1 to 20 (MKGLVLSFALVALSALCVYG), serve as a signal peptide directing secretion. A disulfide bridge connects residues Cys83 and Cys179.

This sequence belongs to the calycin superfamily. Lipocalin family. In terms of assembly, monomer. Expressed mainly in choroid plexus. Much lower expression in other brain areas, and absent from liver.

It is found in the secreted. Functionally, might have a transport function across the blood brain barrier. Is supposed to have similar functions as a transthyretin which must have evolved after the stage of the amphibians in evolution. In Rhinella marina (Cane toad), this protein is Lipocalin.